An 88-amino-acid polypeptide reads, in one-letter code: Auxin-responsive protein SAUR21 (88 aa).

It belongs to the ARG7 family.

It localises to the cell membrane. Its function is as follows. Functions as a positive effector of cell expansion through modulation of auxin transport. In Arabidopsis thaliana (Mouse-ear cress), this protein is Auxin-responsive protein SAUR21.